The chain runs to 332 residues: Diaminopimelate epimerase (332 aa).

Positions 13 and 73 each coordinate substrate. Catalysis depends on C82, which acts as the Proton donor. Residues 83-84 (GN), N172, N209, and 227-228 (ER) contribute to the substrate site. Catalysis depends on C236, which acts as the Proton acceptor. 237–238 (GT) lines the substrate pocket.

This sequence belongs to the diaminopimelate epimerase family. In terms of assembly, homodimer.

The protein localises to the cytoplasm. The catalysed reaction is (2S,6S)-2,6-diaminopimelate = meso-2,6-diaminopimelate. It participates in amino-acid biosynthesis; L-lysine biosynthesis via DAP pathway; DL-2,6-diaminopimelate from LL-2,6-diaminopimelate: step 1/1. Its function is as follows. Catalyzes the stereoinversion of LL-2,6-diaminopimelate (L,L-DAP) to meso-diaminopimelate (meso-DAP), a precursor of L-lysine and an essential component of the bacterial peptidoglycan. The protein is Diaminopimelate epimerase of Lactiplantibacillus plantarum (strain ATCC BAA-793 / NCIMB 8826 / WCFS1) (Lactobacillus plantarum).